A 35-amino-acid polypeptide reads, in one-letter code: Phospholipase A2 bitanarin (35 aa).

The protein belongs to the phospholipase A2 family. Group II subfamily. Monomer. It depends on Ca(2+) as a cofactor. In terms of processing, contains 14 disulfide bonds. As to expression, expressed by the venom gland.

Its subcellular location is the secreted. The enzyme catalyses a 1,2-diacyl-sn-glycero-3-phosphocholine + H2O = a 1-acyl-sn-glycero-3-phosphocholine + a fatty acid + H(+). Functionally, snake venom phospholipase A2 (PLA2) that is the first competitive blocker of nicotinic acetylcholine receptors (nAChRs). Competes with alpha-bungarotoxin for binding to nAChRs and acetylcholine binding proteins (AChBPs) and blocks acetylcholine-elicited current. PLA2 catalyzes the calcium-dependent hydrolysis of the 2-acyl groups in 3-sn-phosphoglycerides. The protein is Phospholipase A2 bitanarin of Bitis arietans (African puff adder).